A 149-amino-acid chain; its full sequence is Transcriptional repressor NrdR (149 aa).

A zinc finger spans residues 3 to 34 (CPFCSAVDTKVIDSRLVAEGHQVRRRRECLLC). The ATP-cone domain maps to 49-139 (PRVIKSNGSR…VYRSFEDIRE (91 aa)).

It belongs to the NrdR family. Requires Zn(2+) as cofactor.

In terms of biological role, negatively regulates transcription of bacterial ribonucleotide reductase nrd genes and operons by binding to NrdR-boxes. This chain is Transcriptional repressor NrdR, found in Aeromonas salmonicida (strain A449).